The sequence spans 516 residues: MSRKKLPIGIQTFAKIREGDDYYYVDKTGFALQLIEQGTHYFLSRPRRFGKSLFLDTLAELFAGNEPLFRGLQVHDRWDWSRRHPVLRISFGGGVIRDAQDLEGKIAELLTINEQALGIACTQRENRARFGELIRQAHAAGGERVVVLVDEYDKPILDNLTRPEIAREIRDGLRNLYSVIKDSDAHVRFAMLSGVSKFSKVSLFSGLNNLDDISVDSRYSALCGYTETDVDAVFAPELPGLDRDEIRAWYNGYNWTGEAVYNPFDLLLLFQKREFRPYWFETGTPTFLVDLLTERRAFTPALEQVMATDALLSAFEVGDISTEALMFQAGYLTIGQVQRIGAQPRYRLRYPNLEVKASLNEALLLRYLPEPASVMRQTGQLYDLLLANDFPGLQTLFTAFFASIPHDWYRNNPIARYEGYYASVFYSHFAALGLDVRLEDATSHGRIDMTVLFNGHVYLFEFKVVELTPAGQALQQLKDKGYADKYRARGEPIHLLGVEFSRDSRSVVGFVVESLG.

This is an uncharacterized protein from Azotobacter chroococcum mcd 1.